A 171-amino-acid polypeptide reads, in one-letter code: MDYFTLFGLPAQYSIDLPALTIRFQDLQRQFHPDKFASGTPAEQLAAVSQSATINQAWQTLRNPLARAEYLLSLHGFDLTSEQHTVRDTAFLMEQLELREELDEIDQAKDEARLESFIKRVKGMFDSRHQQMVEQLNNETWDVAADSVRKLRFLDKLRSSAEQLEEKLLDF.

Residues 2–74 form the J domain; that stretch reads DYFTLFGLPA…LARAEYLLSL (73 aa).

It belongs to the HscB family. Interacts with HscA and stimulates its ATPase activity. Interacts with IscU.

Functionally, co-chaperone involved in the maturation of iron-sulfur cluster-containing proteins. Seems to help targeting proteins to be folded toward HscA. The protein is Co-chaperone protein HscB of Enterobacter sp. (strain 638).